The sequence spans 406 residues: Putative gustatory receptor 59f (406 aa).

At 1–36 the chain is on the cytoplasmic side; that stretch reads MRSSATKGAKLKNSPRERLSSFNPQYAERYKELYRT. The chain crosses the membrane as a helical span at residues 37 to 57; it reads LFWLLLISVLANTAPITILPG. Over 58 to 69 the chain is Extracellular; the sequence is CPNRFYRLVHLS. The chain crosses the membrane as a helical span at residues 70-90; it reads WMILWYGLFVLGSYWEFVLVT. The Cytoplasmic portion of the chain corresponds to 91–99; the sequence is TQRVSLDRY. The helical transmembrane segment at 100–120 threads the bilayer; it reads LNAIESAIYVVHIFSIMLLTW. Over 121–154 the chain is Extracellular; it reads QCRNWAPKLMTNIVTSDLNRAYTIDCNRTKRFIR. Residue N147 is glycosylated (N-linked (GlcNAc...) asparagine). A helical transmembrane segment spans residues 155 to 175; it reads LQLFLVGIFACLAIFFNIWTH. Residues 176 to 189 are Cytoplasmic-facing; sequence KFVVYRSILSINSY. Residues 190 to 210 traverse the membrane as a helical segment; it reads VMPNIISSISFAQYYLLLQGI. Residues 211 to 259 lie on the Extracellular side of the membrane; the sequence is AWRQRRLTEGLERELTHLHSPRISEVQKIRMHHANLIDFTKAVNRTFQY. N-linked (GlcNAc...) asparagine glycosylation is present at N254. A helical transmembrane segment spans residues 260–280; it reads SILLLFVGCFLNFNLVLFLVY. The Cytoplasmic segment spans residues 281–364; sequence QGIENPSMAD…RQHVVCGVIN (84 aa). Residues 365 to 385 traverse the membrane as a helical segment; sequence LDLKFLTTLLVASADFFIFLL. Topologically, residues 386–406 are extracellular; that stretch reads QYDVTYEALSKSVQGNVTRYK. N401 is a glycosylation site (N-linked (GlcNAc...) asparagine).

This sequence belongs to the insect chemoreceptor superfamily. Gustatory receptor (GR) family. Gr10a subfamily. In terms of tissue distribution, expressed in the adult abdomen and wing. In larvae, is expressed in neurons of the terminal external chemosensory organ.

The protein resides in the cell membrane. In terms of biological role, probable gustatory receptor which mediates acceptance or avoidance behavior, depending on its substrates. This chain is Putative gustatory receptor 59f (Gr59f), found in Drosophila melanogaster (Fruit fly).